The following is a 465-amino-acid chain: Beta-1,2-xylosyltransferase XYXT1 (465 aa).

Residues Met-1–Lys-11 are Cytoplasmic-facing. Residues Gly-12–Tyr-32 traverse the membrane as a helical; Signal-anchor for type II membrane protein segment. Over Ser-33–Arg-465 the chain is Lumenal. N-linked (GlcNAc...) asparagine glycans are attached at residues Asn-80, Asn-118, Asn-125, Asn-266, and Asn-403.

The protein belongs to the glycosyltransferase 61 family. As to expression, widely expressed.

It is found in the golgi apparatus membrane. It functions in the pathway glycan metabolism. Its function is as follows. Glycosyltransferase involved in the xylosylation of xylan, the major hemicellulose (non-cellulosic component) of primary and secondary walls of angiosperms. Possesses beta-1,2-xylosyltransferase activity, transferring xylose from UDP-xylose to the xylan backbone. Catalyzes the addition of 2-O-xylosyl side chains to the xylan backbone. The protein is Beta-1,2-xylosyltransferase XYXT1 of Oryza sativa subsp. japonica (Rice).